A 337-amino-acid polypeptide reads, in one-letter code: DNA-directed RNA polymerase subunit alpha (337 aa).

The interval 1–233 (MVREKVKVST…NLFIPFLHVE (233 aa)) is alpha N-terminal domain (alpha-NTD). The segment at 267-337 (LAFQYIFIDQ…IEKAFQKKID (71 aa)) is alpha C-terminal domain (alpha-CTD).

The protein belongs to the RNA polymerase alpha chain family. In plastids the minimal PEP RNA polymerase catalytic core is composed of four subunits: alpha, beta, beta', and beta''. When a (nuclear-encoded) sigma factor is associated with the core the holoenzyme is formed, which can initiate transcription.

It localises to the plastid. The protein localises to the chloroplast. The enzyme catalyses RNA(n) + a ribonucleoside 5'-triphosphate = RNA(n+1) + diphosphate. DNA-dependent RNA polymerase catalyzes the transcription of DNA into RNA using the four ribonucleoside triphosphates as substrates. This chain is DNA-directed RNA polymerase subunit alpha, found in Arabis hirsuta (Hairy rock-cress).